We begin with the raw amino-acid sequence, 30 residues long: Snaclec carinactivase-1 regulatory subunit 17 kDa chain (30 aa).

A C-type lectin domain is found at 1-30; that stretch reads DCLPGWSSHEGHCYKVFNQEMYWADAEKFC. A disulfide bond links cysteine 2 and cysteine 13.

It belongs to the snaclec family. In terms of assembly, heterodimer of a metalloproteinase subunit and a regulatory subunit comprising two polypeptides disulfide-linked (14 kDa and 17 kDa chains). As to expression, expressed by the venom gland.

The protein resides in the secreted. Its function is as follows. Calcium-dependent prothrombin activator. This protein may activate prothrombin via recognition by the regulatory subunit of the calcium ion bound conformation of its gamma-carboxyglutamic acid (GLA) domain, and the subsequent conversion of prothrombin to active thrombin is catalyzed by the catalytic subunit. In Echis carinatus (Saw-scaled viper), this protein is Snaclec carinactivase-1 regulatory subunit 17 kDa chain.